The sequence spans 262 residues: tRNA (guanine-N(1)-)-methyltransferase (262 aa).

S-adenosyl-L-methionine is bound by residues Gly111 and 130 to 135; that span reads LGDFVL.

The protein belongs to the RNA methyltransferase TrmD family. As to quaternary structure, homodimer.

It localises to the cytoplasm. It catalyses the reaction guanosine(37) in tRNA + S-adenosyl-L-methionine = N(1)-methylguanosine(37) in tRNA + S-adenosyl-L-homocysteine + H(+). Specifically methylates guanosine-37 in various tRNAs. The protein is tRNA (guanine-N(1)-)-methyltransferase of Desulfitobacterium hafniense (strain Y51).